Reading from the N-terminus, the 105-residue chain is Replication initiation control protein YabA (105 aa).

4 residues coordinate Zn(2+): His79, Cys81, Cys95, and Cys98.

This sequence belongs to the YabA family. As to quaternary structure, homotetramer. Interacts with both DnaA and DnaN, acting as a bridge between these two proteins. Zn(2+) is required as a cofactor.

It localises to the cytoplasm. The protein resides in the nucleoid. Its function is as follows. Involved in control of chromosome replication initiation. Inhibits the cooperative binding of DnaA to the oriC region, thus negatively regulating initiation of chromosome replication. Inhibits the ability of DnaA-ATP to form a helix on DNA; does not disassemble preformed DnaA-DNA helices. Decreases the residence time of DnaA on the chromosome at its binding sites (oriC, replication forks and promoter-binding sites). Tethers DnaA to the replication machinery via the DNA polymerase beta sliding clamp subunit (dnaN). Associates with oriC and other DnaA targets on the chromosome in a DnaA-dependent manner. The chain is Replication initiation control protein YabA from Streptococcus sanguinis (strain SK36).